A 35-amino-acid chain; its full sequence is Turripeptide gsp9a (35 aa).

4-hydroxyproline is present on residues P3 and P4. Disulfide bonds link C7–C22, C12–C26, and C18–C33. 4-carboxyglutamate is present on residues E14 and E17.

In terms of tissue distribution, expressed by the venom duct.

The protein resides in the secreted. This is Turripeptide gsp9a from Gemmula speciosa (Splendid gem-turris).